The chain runs to 199 residues: Urease accessory protein UreG (199 aa).

Residue 8-15 participates in GTP binding; that stretch reads GPVGSGKT.

It belongs to the SIMIBI class G3E GTPase family. UreG subfamily. In terms of assembly, homodimer. UreH, UreF and UreG form a complex that acts as a GTP-hydrolysis-dependent molecular chaperone, activating the urease apoprotein by helping to assemble the nickel containing metallocenter of UreC. The UreE protein probably delivers the nickel.

It is found in the cytoplasm. In terms of biological role, facilitates the functional incorporation of the urease nickel metallocenter. This process requires GTP hydrolysis, probably effectuated by UreG. The protein is Urease accessory protein UreG of Helicobacter pylori (strain J99 / ATCC 700824) (Campylobacter pylori J99).